Reading from the N-terminus, the 75-residue chain is Sperm-specific protein PL-I (75 aa).

An H15 domain is found at 2 to 74; that stretch reads GSSGMMSMVA…GSAGWVLVPK (73 aa).

Belongs to the histone H1/H5 family. As to expression, sperm.

The protein resides in the nucleus. The protein localises to the chromosome. Linker histones are implicated in chromatin remodeling and/or transcriptional regulation during spermiogenesis, the process of spermatid maturation into spermatozoa. This Spisula solidissima (Atlantic surf-clam) protein is Sperm-specific protein PL-I.